Here is a 153-residue protein sequence, read N- to C-terminus: Myoglobin (153 aa).

The region spanning 1–147 is the Globin domain; that stretch reads MATACVKSLE…FSDECLDHLK (147 aa). Histidine 94 serves as a coordination point for heme b.

Belongs to the globin family. As to quaternary structure, homodimer; disulfide-linked. Post-translationally, the N-terminus is blocked. As to expression, body wall globin is localized in cellular compartments belonging to the hypodermis, the dorsal, ventral and lateral cords, the nerve ring, and body wall muscle.

It localises to the cytoplasm. High oxygen affinity. Probably supplies oxygen needed for muscle activity. The protein is Myoglobin of Ascaris suum (Pig roundworm).